The sequence spans 489 residues: Type II restriction enzyme Sau3AI (489 aa).

Mg(2+) is required as a cofactor.

It catalyses the reaction Endonucleolytic cleavage of DNA to give specific double-stranded fragments with terminal 5'-phosphates.. Its function is as follows. An E and P subtype restriction enzyme that recognizes the double-stranded sequence 5'-GATC-3' and cleaves before G-1. The chain is Type II restriction enzyme Sau3AI (sau3AIR) from Staphylococcus aureus.